We begin with the raw amino-acid sequence, 407 residues long: Bifunctional enzyme IspD/IspF (407 aa).

Residues 1 to 246 (MQPLAEATTI…RQDHVSFPDI (246 aa)) are 2-C-methyl-D-erythritol 4-phosphate cytidylyltransferase. The tract at residues 247–407 (RTGNGYDVHS…TVIYPGEVPE (161 aa)) is 2-C-methyl-D-erythritol 2,4-cyclodiphosphate synthase. A divalent metal cation-binding residues include aspartate 253 and histidine 255. 4-CDP-2-C-methyl-D-erythritol 2-phosphate-binding positions include 253–255 (DVH) and 279–280 (HS). Residue histidine 287 participates in a divalent metal cation binding. Residues 301–303 (DIG), 377–380 (TTNE), phenylalanine 384, and arginine 387 each bind 4-CDP-2-C-methyl-D-erythritol 2-phosphate.

The protein in the N-terminal section; belongs to the IspD/TarI cytidylyltransferase family. IspD subfamily. This sequence in the C-terminal section; belongs to the IspF family. The cofactor is a divalent metal cation.

The catalysed reaction is 2-C-methyl-D-erythritol 4-phosphate + CTP + H(+) = 4-CDP-2-C-methyl-D-erythritol + diphosphate. It carries out the reaction 4-CDP-2-C-methyl-D-erythritol 2-phosphate = 2-C-methyl-D-erythritol 2,4-cyclic diphosphate + CMP. The protein operates within isoprenoid biosynthesis; isopentenyl diphosphate biosynthesis via DXP pathway; isopentenyl diphosphate from 1-deoxy-D-xylulose 5-phosphate: step 2/6. Its pathway is isoprenoid biosynthesis; isopentenyl diphosphate biosynthesis via DXP pathway; isopentenyl diphosphate from 1-deoxy-D-xylulose 5-phosphate: step 4/6. Bifunctional enzyme that catalyzes the formation of 4-diphosphocytidyl-2-C-methyl-D-erythritol from CTP and 2-C-methyl-D-erythritol 4-phosphate (MEP) (IspD), and catalyzes the conversion of 4-diphosphocytidyl-2-C-methyl-D-erythritol 2-phosphate (CDP-ME2P) to 2-C-methyl-D-erythritol 2,4-cyclodiphosphate (ME-CPP) with a corresponding release of cytidine 5-monophosphate (CMP) (IspF). This Brucella anthropi (strain ATCC 49188 / DSM 6882 / CCUG 24695 / JCM 21032 / LMG 3331 / NBRC 15819 / NCTC 12168 / Alc 37) (Ochrobactrum anthropi) protein is Bifunctional enzyme IspD/IspF.